Consider the following 627-residue polypeptide: UvrABC system protein C (627 aa).

The region spanning 26-105 is the GIY-YIG domain; it reads PEPGVYFMRD…IKQHQPYFNV (80 aa). In terms of domain architecture, UVR spans 215–250; that stretch reads QELIDILSEQMEKAAEALNFEVAARIRDQIAGLKSL.

The protein belongs to the UvrC family. As to quaternary structure, interacts with UvrB in an incision complex.

The protein resides in the cytoplasm. Functionally, the UvrABC repair system catalyzes the recognition and processing of DNA lesions. UvrC both incises the 5' and 3' sides of the lesion. The N-terminal half is responsible for the 3' incision and the C-terminal half is responsible for the 5' incision. The chain is UvrABC system protein C from Nostoc sp. (strain PCC 7120 / SAG 25.82 / UTEX 2576).